A 114-amino-acid polypeptide reads, in one-letter code: Small ribosomal subunit protein uS17 (114 aa).

This sequence belongs to the universal ribosomal protein uS17 family. Part of the 30S ribosomal subunit.

In terms of biological role, one of the primary rRNA binding proteins, it binds specifically to the 5'-end of 16S ribosomal RNA. The chain is Small ribosomal subunit protein uS17 from Aeropyrum pernix (strain ATCC 700893 / DSM 11879 / JCM 9820 / NBRC 100138 / K1).